A 234-amino-acid chain; its full sequence is UDP-2,3-diacylglucosamine hydrolase (234 aa).

5 residues coordinate Mn(2+): aspartate 9, histidine 11, aspartate 42, asparagine 80, and histidine 115. 80–81 is a substrate binding site; that stretch reads NR. The substrate site is built by aspartate 123, serine 161, lysine 165, lysine 168, and histidine 196. Histidine 196 and histidine 198 together coordinate Mn(2+).

The protein belongs to the LpxH family. The cofactor is Mn(2+).

Its subcellular location is the cell inner membrane. The enzyme catalyses UDP-2-N,3-O-bis[(3R)-3-hydroxytetradecanoyl]-alpha-D-glucosamine + H2O = 2-N,3-O-bis[(3R)-3-hydroxytetradecanoyl]-alpha-D-glucosaminyl 1-phosphate + UMP + 2 H(+). It functions in the pathway glycolipid biosynthesis; lipid IV(A) biosynthesis; lipid IV(A) from (3R)-3-hydroxytetradecanoyl-[acyl-carrier-protein] and UDP-N-acetyl-alpha-D-glucosamine: step 4/6. Functionally, hydrolyzes the pyrophosphate bond of UDP-2,3-diacylglucosamine to yield 2,3-diacylglucosamine 1-phosphate (lipid X) and UMP by catalyzing the attack of water at the alpha-P atom. Involved in the biosynthesis of lipid A, a phosphorylated glycolipid that anchors the lipopolysaccharide to the outer membrane of the cell. The chain is UDP-2,3-diacylglucosamine hydrolase from Histophilus somni (strain 2336) (Haemophilus somnus).